Reading from the N-terminus, the 554-residue chain is MASSQVGDMVNGNAEPTRHLAKFPPSLWGDRFTSFTLDKQLWDKYGNEIEVLKEQVRSMVVAGGRKAAEQINLINVLERLGVSYHFEKEIEEQLEQLFAKFEDNEDYDLFTIALHFRIFRQHGYKMSCDVFNKFRDSNGEFKETVSNDVQGMLSLYEATYLKIRGEGFLDEAHAFTIAQLESLVGGPHLSSDLSEQVMHALKQSIHRGFPRLEAKHFISFYEKDASRNETLLRLAKLDFNQLQLSHREELCHIFRWWKELDLISKVPYARDRAVECFFWSTCAYYEPQHSVGRAVLTKIMLLLSVTDDTYDAYGTYDELKLYTNAVQRWDVSAMDELPDYMKALYRALLNVYDEVERDLAKQGRDYGVHHSKEAFKEIVRSYEIEAEWFKEGYVASFEEYMKNALVTSTGRLHTTSCFMGLEADVATTEAFEWILTKPKMVAASGAIGRLVDDVMSHDEEQERGHVATGLDCYMKQRGVSKQEAIVELYKMIENAWRDINEEMLKPTAISMKLLIRVLNLSRISDVVYKYVDGYTHPEIIKDHVISLFEDPIPM.

Mg(2+) is bound by residues Asp307 and Asp311. A DDXXD motif motif is present at residues 326 to 330 (VQRWD). Mg(2+)-binding residues include Asp452, Ser456, and Glu460.

It belongs to the terpene synthase family. Mg(2+) is required as a cofactor. In terms of tissue distribution, expressed in flowers.

The enzyme catalyses (2E,6E)-farnesyl diphosphate + H2O = valerianol + diphosphate. It functions in the pathway secondary metabolite biosynthesis; terpenoid biosynthesis. In terms of biological role, terpene synthase that catalyzes the biosynthesis of the terpene valerianol, which is a volatile compound of floral scent. In Camellia hiemalis (Camellia), this protein is Valerianol synthase TPS1A.